The following is a 313-amino-acid chain: tRNA pseudouridine synthase B (313 aa).

The active-site Nucleophile is the Asp-42.

Belongs to the pseudouridine synthase TruB family. Type 1 subfamily.

It carries out the reaction uridine(55) in tRNA = pseudouridine(55) in tRNA. Responsible for synthesis of pseudouridine from uracil-55 in the psi GC loop of transfer RNAs. This Prochlorococcus marinus (strain SARG / CCMP1375 / SS120) protein is tRNA pseudouridine synthase B.